The sequence spans 75 residues: Defensin-like protein 58 (75 aa).

A signal peptide spans methionine 1–serine 23. 4 disulfide bridges follow: cysteine 39–cysteine 73, cysteine 43–cysteine 66, cysteine 52–cysteine 71, and cysteine 56–cysteine 72.

Belongs to the DEFL family.

Its subcellular location is the secreted. The sequence is that of Defensin-like protein 58 from Arabidopsis thaliana (Mouse-ear cress).